Here is a 241-residue protein sequence, read N- to C-terminus: Eukaryotic translation initiation factor 3 subunit J (241 aa).

Residues 1-27 (MEEDWEQHGEKEEVPLPAKKPDANKWD) are compositionally biased toward basic and acidic residues. The disordered stretch occupies residues 1–99 (MEEDWEQHGE…ENMTPEQKLA (99 aa)). Residues 28-45 (GEDEEEEVKDSWEDEDEL) show a composition bias toward acidic residues. The stretch at 31 to 119 (EEEEVKDSWE…ESDLKNALDT (89 aa)) forms a coiled coil. 2 stretches are compositionally biased toward basic and acidic residues: residues 46-58 (EEKK…ETPK) and 69-90 (IVEK…KEAE).

Belongs to the eIF-3 subunit J family. In terms of assembly, component of the eukaryotic translation initiation factor 3 (eIF-3) complex.

It is found in the cytoplasm. Functionally, component of the eukaryotic translation initiation factor 3 (eIF-3) complex, which is involved in protein synthesis of a specialized repertoire of mRNAs and, together with other initiation factors, stimulates binding of mRNA and methionyl-tRNAi to the 40S ribosome. The eIF-3 complex specifically targets and initiates translation of a subset of mRNAs involved in cell proliferation. This is Eukaryotic translation initiation factor 3 subunit J from Culex quinquefasciatus (Southern house mosquito).